A 269-amino-acid chain; its full sequence is Aquaporin-1 (269 aa).

At 1-11 (MASEIKKKLFW) the chain is on the cytoplasmic side. Residues 12–29 (RAVVAEFLAMTLFVFISI) form a helical membrane-spanning segment. Over 30-46 (GSALGFNYPLERNQTLV) the chain is Extracellular. Asn-42 carries an N-linked (GlcNAc...) asparagine glycan. The chain crosses the membrane as a helical span at residues 47-65 (QDNVKVSLAFGLSIATLAQ). Residues 66-68 (SVG) are Cytoplasmic-facing. An intramembrane segment occupies 69–82 (HISGAHLNPAVTLG). The NPA 1 signature appears at 76–78 (NPA). Residues 83 to 90 (LLLSCQIS) lie on the Cytoplasmic side of the membrane. Residues 91 to 109 (ILRAVMYIIAQCVGAIVAS) form a helical membrane-spanning segment. Residues 110–133 (AILSGITSSLLENSLGRNDLARGV) lie on the Extracellular side of the membrane. A helical membrane pass occupies residues 134–153 (NSGQGLGIEIIGTLQLVLCV). The Cytoplasmic segment spans residues 154–163 (LATTDRRRRD). The chain crosses the membrane as a helical span at residues 164–181 (LGGSAPLAIGLSVALGHL). Topologically, residues 182–186 (LAIDY) are extracellular. The stretch at 187-199 (TGCGINPARSFGS) is an intramembrane region. Residues 192–194 (NPA) carry the NPA 2 motif. The Extracellular segment spans residues 200–206 (AVLTRNF). Asn-205 carries N-linked (GlcNAc...) asparagine glycosylation. A helical membrane pass occupies residues 207 to 224 (SNHWIFWVGPFIGSALAV). The Cytoplasmic portion of the chain corresponds to 225-269 (LIYDFILAPRSSDFTDRMKVWTSGQVEEYDLDADDINSRVEMKPK). Ser-247 carries the phosphoserine modification. Position 253 is a phosphotyrosine (Tyr-253). Phosphoserine is present on Ser-262.

The protein belongs to the MIP/aquaporin (TC 1.A.8) family. Homotetramer; each monomer provides an independent water pore. Component of the ankyrin-1 complex in the erythrocyte, composed of ANK1, RHCE, RHAG, SLC4A1, EPB42, GYPA, GYPB and AQP1. Interacts with EPHB2; involved in endolymph production in the inner ear. Identified in a complex with STOM. Interacts (via the N-terminal) with ANK1 (via ANK 1-5 repeats). Interacts (via the C-terminal) with EPB42. Erythrocytes and renal tubules.

It is found in the cell membrane. The enzyme catalyses H2O(in) = H2O(out). It catalyses the reaction nitric oxide(out) = nitric oxide(in). The catalysed reaction is CO2(out) = CO2(in). It carries out the reaction glycerol(in) = glycerol(out). The enzyme catalyses H2O2(out) = H2O2(in). It catalyses the reaction K(+)(in) = K(+)(out). The catalysed reaction is Na(+)(in) = Na(+)(out). Forms a water channel that facilitates the transport of water across cell membranes, playing a crucial role in water homeostasis in various tissues. Could also be permeable to small solutes including hydrogen peroxide, glycerol and gases such as amonnia (NH3), nitric oxide (NO) and carbon dioxide (CO2). Recruited to the ankyrin-1 complex, a multiprotein complex of the erythrocyte membrane, it could be part of a CO2 metabolon, linking facilitated diffusion of CO2 across the membrane, anion exchange of Cl(-)/HCO3(-) and interconversion of dissolved CO2 and carbonic acid in the cytosol. In vitro, it shows non-selective gated cation channel activity and may be permeable to cations like K(+) and Na(+) in vivo. The sequence is that of Aquaporin-1 from Rattus norvegicus (Rat).